A 73-amino-acid polypeptide reads, in one-letter code: MSLELLSKLETKIQATLETIELLKMELEEEKQKASTLSEQNQQLTEQNQQLQQELASWNDKVTGLVGLLNSEI.

The stretch at Leu3–Gly67 forms a coiled coil.

This sequence belongs to the ZapB family. As to quaternary structure, homodimer. The ends of the coiled-coil dimer bind to each other, forming polymers. Interacts with FtsZ.

Its subcellular location is the cytoplasm. Its function is as follows. Non-essential, abundant cell division factor that is required for proper Z-ring formation. It is recruited early to the divisome by direct interaction with FtsZ, stimulating Z-ring assembly and thereby promoting cell division earlier in the cell cycle. Its recruitment to the Z-ring requires functional FtsA or ZipA. The protein is Cell division protein ZapB of Shewanella sp. (strain MR-4).